A 513-amino-acid polypeptide reads, in one-letter code: Maturase K (513 aa).

Belongs to the intron maturase 2 family. MatK subfamily.

The protein localises to the plastid. It is found in the chloroplast. Usually encoded in the trnK tRNA gene intron. Probably assists in splicing its own and other chloroplast group II introns. The chain is Maturase K from Typha latifolia (Bulrush).